We begin with the raw amino-acid sequence, 393 residues long: Phospho-N-acetylmuramoyl-pentapeptide-transferase (393 aa).

10 helical membrane passes run 29 to 49, 75 to 95, 101 to 121, 138 to 158, 193 to 213, 226 to 246, 263 to 283, 290 to 310, 315 to 335, and 370 to 390; these read RAVM…PIVI, TPTM…LLWF, FVWI…VDDW, YFWQ…SVSE, SISY…VIVG, GLAI…AYAT, AGEL…FLWF, VFMG…IAVI, VVLA…MAQV, and QVVV…LSSL.

This sequence belongs to the glycosyltransferase 4 family. MraY subfamily. Mg(2+) serves as cofactor.

Its subcellular location is the cell inner membrane. It catalyses the reaction UDP-N-acetyl-alpha-D-muramoyl-L-alanyl-gamma-D-glutamyl-meso-2,6-diaminopimeloyl-D-alanyl-D-alanine + di-trans,octa-cis-undecaprenyl phosphate = di-trans,octa-cis-undecaprenyl diphospho-N-acetyl-alpha-D-muramoyl-L-alanyl-D-glutamyl-meso-2,6-diaminopimeloyl-D-alanyl-D-alanine + UMP. It participates in cell wall biogenesis; peptidoglycan biosynthesis. Catalyzes the initial step of the lipid cycle reactions in the biosynthesis of the cell wall peptidoglycan: transfers peptidoglycan precursor phospho-MurNAc-pentapeptide from UDP-MurNAc-pentapeptide onto the lipid carrier undecaprenyl phosphate, yielding undecaprenyl-pyrophosphoryl-MurNAc-pentapeptide, known as lipid I. The chain is Phospho-N-acetylmuramoyl-pentapeptide-transferase from Methylibium petroleiphilum (strain ATCC BAA-1232 / LMG 22953 / PM1).